Reading from the N-terminus, the 260-residue chain is NH(3)-dependent NAD(+) synthetase (260 aa).

31–38 lines the ATP pocket; it reads GLSGGLDS. Residue Asp-37 participates in Mg(2+) binding. Arg-112 serves as a coordination point for deamido-NAD(+). Thr-132 is a binding site for ATP. Glu-137 is a Mg(2+) binding site. Residues Lys-161 and Ser-183 each contribute to the ATP site.

The protein belongs to the NAD synthetase family. Homodimer.

It catalyses the reaction deamido-NAD(+) + NH4(+) + ATP = AMP + diphosphate + NAD(+) + H(+). Its pathway is cofactor biosynthesis; NAD(+) biosynthesis; NAD(+) from deamido-NAD(+) (ammonia route): step 1/1. In terms of biological role, catalyzes the ATP-dependent amidation of deamido-NAD to form NAD. Uses ammonia as a nitrogen source. This is NH(3)-dependent NAD(+) synthetase from Helicobacter pylori (strain ATCC 700392 / 26695) (Campylobacter pylori).